A 331-amino-acid chain; its full sequence is Protein RecA (331 aa).

Glycine 67–threonine 74 contributes to the ATP binding site.

This sequence belongs to the RecA family.

Its subcellular location is the cytoplasm. Functionally, can catalyze the hydrolysis of ATP in the presence of single-stranded DNA, the ATP-dependent uptake of single-stranded DNA by duplex DNA, and the ATP-dependent hybridization of homologous single-stranded DNAs. It interacts with LexA causing its activation and leading to its autocatalytic cleavage. The sequence is that of Protein RecA from Wigglesworthia glossinidia brevipalpis.